We begin with the raw amino-acid sequence, 577 residues long: Arginine--tRNA ligase (577 aa).

The 'HIGH' region signature appears at 124 to 132 (VAKEMHVGH).

Belongs to the class-I aminoacyl-tRNA synthetase family. As to quaternary structure, monomer.

The protein localises to the cytoplasm. It carries out the reaction tRNA(Arg) + L-arginine + ATP = L-arginyl-tRNA(Arg) + AMP + diphosphate. The sequence is that of Arginine--tRNA ligase from Salmonella typhi.